A 100-amino-acid chain; its full sequence is Small ribosomal subunit protein uS14c (100 aa).

This sequence belongs to the universal ribosomal protein uS14 family. As to quaternary structure, part of the 30S ribosomal subunit.

It is found in the plastid. It localises to the chloroplast. Functionally, binds 16S rRNA, required for the assembly of 30S particles. The protein is Small ribosomal subunit protein uS14c of Pelargonium hortorum (Common geranium).